A 387-amino-acid chain; its full sequence is Dual-specificity RNA methyltransferase RlmN (387 aa).

Residue glutamate 110 is the Proton acceptor of the active site. Residues 117–349 enclose the Radical SAM core domain; sequence VGKAGALCVS…NRAGYASPIR (233 aa). A disulfide bond links cysteine 124 and cysteine 360. Cysteine 131, cysteine 135, and cysteine 138 together coordinate [4Fe-4S] cluster. S-adenosyl-L-methionine-binding positions include 186–187, serine 218, 240–242, and asparagine 317; these read GE and SLH. The active-site S-methylcysteine intermediate is the cysteine 360.

The protein belongs to the radical SAM superfamily. RlmN family. Requires [4Fe-4S] cluster as cofactor.

It localises to the cytoplasm. The enzyme catalyses adenosine(2503) in 23S rRNA + 2 reduced [2Fe-2S]-[ferredoxin] + 2 S-adenosyl-L-methionine = 2-methyladenosine(2503) in 23S rRNA + 5'-deoxyadenosine + L-methionine + 2 oxidized [2Fe-2S]-[ferredoxin] + S-adenosyl-L-homocysteine. It carries out the reaction adenosine(37) in tRNA + 2 reduced [2Fe-2S]-[ferredoxin] + 2 S-adenosyl-L-methionine = 2-methyladenosine(37) in tRNA + 5'-deoxyadenosine + L-methionine + 2 oxidized [2Fe-2S]-[ferredoxin] + S-adenosyl-L-homocysteine. Specifically methylates position 2 of adenine 2503 in 23S rRNA and position 2 of adenine 37 in tRNAs. m2A2503 modification seems to play a crucial role in the proofreading step occurring at the peptidyl transferase center and thus would serve to optimize ribosomal fidelity. The protein is Dual-specificity RNA methyltransferase RlmN of Hyphomonas neptunium (strain ATCC 15444).